The sequence spans 109 residues: Sperm-specific class P protein 16 (109 aa).

The MSP domain maps to 2–109 (SLTADPPACT…TVTIPMSATA (108 aa)).

In terms of tissue distribution, expressed at higher level in testis.

In Caenorhabditis elegans, this protein is Sperm-specific class P protein 16 (ssp-16).